Here is an 856-residue protein sequence, read N- to C-terminus: Translation initiation factor IF-2 (856 aa).

The 171-residue stretch at 356–526 (PRAPVVTVMG…LLIADLLELK (171 aa)) folds into the tr-type G domain. Residues 365 to 372 (GHVDHGKT) are G1. Position 365–372 (365–372 (GHVDHGKT)) interacts with GTP. The interval 390-394 (GITQH) is G2. Positions 412 to 415 (DTPG) are G3. GTP contacts are provided by residues 412-416 (DTPGH) and 466-469 (NKID). The G4 stretch occupies residues 466-469 (NKID). The segment at 502–504 (SAK) is G5.

The protein belongs to the TRAFAC class translation factor GTPase superfamily. Classic translation factor GTPase family. IF-2 subfamily.

The protein resides in the cytoplasm. In terms of biological role, one of the essential components for the initiation of protein synthesis. Protects formylmethionyl-tRNA from spontaneous hydrolysis and promotes its binding to the 30S ribosomal subunits. Also involved in the hydrolysis of GTP during the formation of the 70S ribosomal complex. The sequence is that of Translation initiation factor IF-2 from Ehrlichia ruminantium (strain Welgevonden).